The primary structure comprises 832 residues: Valine--tRNA ligase (832 aa).

The short motif at 41–51 (PNVTGKLHLGH) is the 'HIGH' region element. Positions 512–516 (KMSKS) match the 'KMSKS' region motif. K515 is a binding site for ATP. The stretch at 760 to 831 (FIEISQEQKQ…QIYLEELKWK (72 aa)) forms a coiled coil.

This sequence belongs to the class-I aminoacyl-tRNA synthetase family. ValS type 1 subfamily. Monomer.

The protein resides in the cytoplasm. The enzyme catalyses tRNA(Val) + L-valine + ATP = L-valyl-tRNA(Val) + AMP + diphosphate. In terms of biological role, catalyzes the attachment of valine to tRNA(Val). As ValRS can inadvertently accommodate and process structurally similar amino acids such as threonine, to avoid such errors, it has a 'posttransfer' editing activity that hydrolyzes mischarged Thr-tRNA(Val) in a tRNA-dependent manner. In Mycoplasmopsis synoviae (strain 53) (Mycoplasma synoviae), this protein is Valine--tRNA ligase.